Reading from the N-terminus, the 65-residue chain is Movement protein TGBp3 (65 aa).

Residues 1–6 (MLPKMQ) lie on the Lumenal side of the membrane. A helical transmembrane segment spans residues 7-26 (PSAQCLIVFSLAFVLGWYVL). The Cytoplasmic segment spans residues 27 to 65 (RPGNTSCVLLITGESVRLVNCELTKDLVEAVLLRPLKHL).

It belongs to the Tymovirales TGBp3 protein family.

Its subcellular location is the host endoplasmic reticulum membrane. Functionally, plays a role in viral cell-to-cell propagation, by facilitating genome transport to neighboring plant cells through plasmosdesmata. May induce the formation of granular vesicles derived from the Endoplasmic reticulum, which align on actin filaments. The sequence is that of Movement protein TGBp3 from Potato virus S (strain Peruvian).